We begin with the raw amino-acid sequence, 603 residues long: Extracellular basic protease (603 aa).

Residues 1 to 21 (MNLSNISAVKVLTLVVSAAIA) form the signal peptide. A propeptide spanning residues 22–132 (GQVCAAESIV…VEVDRLAYPK (111 aa)) is cleaved from the precursor. In terms of domain architecture, Peptidase S8 spans 143–468 (QWHYFGNYGV…SGIVDANAAV (326 aa)). D173 (charge relay system) is an active-site residue. The disordered stretch occupies residues 197–221 (PNARDGDQRDNNPADEGDWFDNWDC). 2 cysteine pairs are disulfide-bonded: C221/C273 and C315/C352. The active-site Charge relay system is H237. S409 (charge relay system) is an active-site residue. A propeptide spanning residues 477–603 (RAQPRPPVNQ…GSIDSWSLTF (127 aa)) is cleaved from the precursor. Residues 478–603 (AQPRPPVNQP…GSIDSWSLTF (126 aa)) form the P/Homo B domain.

It belongs to the peptidase S8 family.

The protein resides in the secreted. This is Extracellular basic protease (bprV) from Dichelobacter nodosus (Bacteroides nodosus).